The following is a 319-amino-acid chain: tRNA-cytidine(32) 2-sulfurtransferase (319 aa).

Positions 45-50 (SGGKDS) match the PP-loop motif motif. Residues cysteine 120, cysteine 123, and cysteine 211 each contribute to the [4Fe-4S] cluster site.

This sequence belongs to the TtcA family. In terms of assembly, homodimer. The cofactor is Mg(2+). [4Fe-4S] cluster serves as cofactor.

The protein resides in the cytoplasm. The catalysed reaction is cytidine(32) in tRNA + S-sulfanyl-L-cysteinyl-[cysteine desulfurase] + AH2 + ATP = 2-thiocytidine(32) in tRNA + L-cysteinyl-[cysteine desulfurase] + A + AMP + diphosphate + H(+). The protein operates within tRNA modification. Its function is as follows. Catalyzes the ATP-dependent 2-thiolation of cytidine in position 32 of tRNA, to form 2-thiocytidine (s(2)C32). The sulfur atoms are provided by the cysteine/cysteine desulfurase (IscS) system. The protein is tRNA-cytidine(32) 2-sulfurtransferase of Shewanella woodyi (strain ATCC 51908 / MS32).